Reading from the N-terminus, the 131-residue chain is Large ribosomal subunit protein bL19 (131 aa).

This sequence belongs to the bacterial ribosomal protein bL19 family.

Functionally, this protein is located at the 30S-50S ribosomal subunit interface and may play a role in the structure and function of the aminoacyl-tRNA binding site. The polypeptide is Large ribosomal subunit protein bL19 (Rhodopseudomonas palustris (strain BisA53)).